The following is a 158-amino-acid chain: uncharacterized protein (158 aa).

The next 4 membrane-spanning stretches (helical) occupy residues 42–62, 71–91, 102–122, and 130–150; these read FHFAVIVITMLAYLSAFGFLY, WIFIGFLGSMVINAIFPHLIA, LLTGLLLNIPVNSLVIYQMFL, and ELIISTLVVGIILLALIPLLF.

Its subcellular location is the cell membrane. This is an uncharacterized protein from Bacillus subtilis (strain 168).